We begin with the raw amino-acid sequence, 519 residues long: Dideacetyl fusicoccin A C-19 hydroxylase (519 aa).

Residues 16–36 (LPVAPILFTALAATIGAFLLS) form a helical membrane-spanning segment. Residues Asn-177, Asn-327, Asn-414, and Asn-432 are each glycosylated (N-linked (GlcNAc...) asparagine). Cys-454 contributes to the heme binding site.

Belongs to the cytochrome P450 family. Requires heme as cofactor.

The protein resides in the membrane. The protein operates within mycotoxin biosynthesis. In terms of biological role, cytochrome P450 monooxygenase; part of the 2 gene clusters that mediate the biosynthesis of fusicoccins, diterpene glucosides that display phytohormone-like activity and function as potent activators of plasma membrane H(+)-ATPases in plants by modifying 14-3-3 proteins and cause the plant disease constriction canker. The first step in the pathway is performed by the fusicoccadiene synthase PaFS that possesses both prenyl transferase and terpene cyclase activity, converting isopentenyl diphosphate and dimethylallyl diphosphate into geranylgeranyl diphosphate (GGDP) and successively converting GGDP into fusicocca-2,10(14)-diene, a precursor for fusicoccin H. The second step is the oxidation at the C-8 position by the cytochrome P450 monooxygenase PaP450-2 to yield fusicocca-2,10(14)-diene-8-beta-ol. The cytochrome P450 monooxygenase PaP450-1 then catalyzes the hydroxylation at the C-16 position to produce fusicocca-2,10(14)-diene-8-beta,16-diol. The dioxygenase fc-dox then catalyzes the 16-oxydation of fusicocca-2,10(14)-diene-8-beta,16-diol to yield an aldehyde (8-beta-hydroxyfusicocca-1,10(14)-dien-16-al). The short-chain dehydrogenase/reductase fc-sdr catalyzes the reduction of the aldehyde to yield fusicocca-1,10(14)-diene-8-beta,16-diol. The next step is the hydroxylation at C-9 performed by the cytochrome P450 monooxygenase PaP450-3 that leads to fusicoccin H aglycon which is glycosylated to fusicoccin H by the O-glycosyltransferase PaGT. Hydroxylation at C-12 by the cytochrome P450 monooxygenase PaP450-4 leads then to the production of fusicoccin Q and is followed by methylation by the O-methyltransferase PaMT to yield fusicoccin P. Fusicoccin P is further converted to fusicoccin J via prenylation by the O-glucose prenyltransferase PaPT. Cytochrome P450 monooxygenase PaP450-5 then performs hydroxylation at C-19 to yield dideacetyl-fusicoccin A which is acetylated to 3'-O-deacetyl-fusicoccin A by the O-acetyltransferase PaAT-2. Finally, a another acetylation by the O-acetyltransferase PaAT-1 yields fusicoccin A. The sequence is that of Dideacetyl fusicoccin A C-19 hydroxylase from Phomopsis amygdali (Fusicoccum amygdali).